The primary structure comprises 430 residues: Adenylosuccinate synthetase (430 aa).

Residues 12-18 and 40-42 contribute to the GTP site; these read GDEGKGK and GHT. Aspartate 13 (proton acceptor) is an active-site residue. The Mg(2+) site is built by aspartate 13 and glycine 40. Residues 13-16, 38-41, threonine 128, arginine 142, glutamine 223, threonine 238, and arginine 302 each bind IMP; these read DEGK and NAGH. The active-site Proton donor is histidine 41. Residue 298–304 coordinates substrate; that stretch reads TTTGRPR. GTP is bound by residues arginine 304, 330 to 332, and 413 to 415; these read SID and SVG.

This sequence belongs to the adenylosuccinate synthetase family. As to quaternary structure, homodimer. The cofactor is Mg(2+).

It localises to the cytoplasm. It carries out the reaction IMP + L-aspartate + GTP = N(6)-(1,2-dicarboxyethyl)-AMP + GDP + phosphate + 2 H(+). Its pathway is purine metabolism; AMP biosynthesis via de novo pathway; AMP from IMP: step 1/2. Its function is as follows. Plays an important role in the de novo pathway of purine nucleotide biosynthesis. Catalyzes the first committed step in the biosynthesis of AMP from IMP. The sequence is that of Adenylosuccinate synthetase from Lactococcus lactis subsp. cremoris (strain SK11).